A 330-amino-acid polypeptide reads, in one-letter code: Beta-ketoacyl-[acyl-carrier-protein] synthase III (330 aa).

Residues Cys-115 and His-255 contribute to the active site. Residues 256-260 (QANFR) form an ACP-binding region. Asn-285 is an active-site residue.

Belongs to the thiolase-like superfamily. FabH family. In terms of assembly, homodimer.

It is found in the cytoplasm. The catalysed reaction is malonyl-[ACP] + acetyl-CoA + H(+) = 3-oxobutanoyl-[ACP] + CO2 + CoA. It participates in lipid metabolism; fatty acid biosynthesis. In terms of biological role, catalyzes the condensation reaction of fatty acid synthesis by the addition to an acyl acceptor of two carbons from malonyl-ACP. Catalyzes the first condensation reaction which initiates fatty acid synthesis and may therefore play a role in governing the total rate of fatty acid production. Possesses both acetoacetyl-ACP synthase and acetyl transacylase activities. Its substrate specificity determines the biosynthesis of branched-chain and/or straight-chain of fatty acids. The chain is Beta-ketoacyl-[acyl-carrier-protein] synthase III from Helicobacter pylori (strain G27).